We begin with the raw amino-acid sequence, 952 residues long: MPIVRWLLLKSAVRGSSLIGKAHPCLRSIAAHPRYLSNVYSPPAGVSRSLRINVMWKQSKLTPPRFVKIMNRRPLFTETSHACAKCQKTSQLLNKTPNREILPDNVVPLHYDLTVEPDFKTFKFEGSVKIELKINNPAIDTVTLNTVDTDIHSAKIGDVTSSEIISEEEQQVTTFAFPKGTMSSFKGNAFLDIKFTGILNDNMAGFYRAKYEDKLTGETKYMATTQMEPTDARRAFPCFDEPNLKASFAITLVSDPSLTHLSNMDVKNEYVKDGKKVTLFNTTPKMSTYLVAFIVAELKYVESKNFRIPVRVYATPGNEKHGQFAADLTAKTLAFFEKTFGIQYPLPKMDNVAVHEFSAGAMENWGLVTYRVVDLLLDKDNSTLDRIQRVAEVVQHELAHQWFGNLVTMDWWEGLWLNEGFATWMSWYSCNEFQPEWKVWEQYVTDTLQHALSLDSLRSSHPIEVPVKKADEINQIFDAISYSKGASLLRMISKWLGEETFIKGVSQYLNKFKYGNAKTEDLWDALADASGKDVRSVMNIWTKKVGFPVISVSEDGNGKITFRQNRYLSTADVKPDEDKTIYPVFLALKTKNGVDSSVVLSERSKTIELEDPTFFKVNSEQSGIYITSYTDERWAKLGQQADLLSVEDRVGLVADVKTLSASGYTSTTNFLNLVSKWNNEKSFVVWDQIINSISSMKSTWLFEPKETQDALDNFTKQLISGMTHHLGWEFKSSDSFSTQRLKVTMFGAACAARDADVEKAALKMFTDYCSGNKEAIPALIKPIVFNTVARVGGAENYEKVYKIYLDPISNDEKLAALRSLGRFKEPKLLERTLGYLFDGTVLNQDIYIPMQGMRAHQEGVEALWNWVKKNWDELVKRLPPGLSMLGSVVTLGTSGFTSMQKIDEIKKFFATKSTKGFDQSLAQSLDTITSKAQWVNRDRDVVNKYLKENGYY.

The N-terminal 52 residues, M1 to I52, are a transit peptide targeting the mitochondrion. Substrate contacts are provided by residues E228 and G360–N364. N381 carries an N-linked (GlcNAc...) asparagine glycan. H396 lines the Zn(2+) pocket. The active-site Proton acceptor is the E397. Zn(2+) is bound by residues H400 and E419. N713 carries an N-linked (GlcNAc...) asparagine glycan.

Belongs to the peptidase M1 family. The cofactor is Zn(2+).

It localises to the periplasm. The protein resides in the cytoplasm. It is found in the mitochondrion. Functionally, involved in the cellular supply of leucine from externally offered leucine-containing dipeptide substrates. The sequence is that of Aminopeptidase 2, mitochondrial (APE2) from Saccharomyces cerevisiae (strain ATCC 204508 / S288c) (Baker's yeast).